A 161-amino-acid chain; its full sequence is uncharacterized protein (161 aa).

The stretch at 1 to 29 (MTLYDTVKELQEKLRNGEIEINTFLERLG) forms a coiled coil.

This is an uncharacterized protein from Acidianus convivator (ATV).